Reading from the N-terminus, the 78-residue chain is D-alanyl carrier protein (78 aa).

The 78-residue stretch at 1–78 (MDFKQEVLDV…NIVNQLSELK (78 aa)) folds into the Carrier domain. Residue serine 36 is modified to O-(pantetheine 4'-phosphoryl)serine.

Belongs to the DltC family. 4'-phosphopantetheine is transferred from CoA to a specific serine of apo-DCP.

The protein localises to the cytoplasm. The protein operates within cell wall biogenesis; lipoteichoic acid biosynthesis. Its function is as follows. Carrier protein involved in the D-alanylation of lipoteichoic acid (LTA). The loading of thioester-linked D-alanine onto DltC is catalyzed by D-alanine--D-alanyl carrier protein ligase DltA. The DltC-carried D-alanyl group is further transferred to cell membrane phosphatidylglycerol (PG) by forming an ester bond, probably catalyzed by DltD. D-alanylation of LTA plays an important role in modulating the properties of the cell wall in Gram-positive bacteria, influencing the net charge of the cell wall. This chain is D-alanyl carrier protein, found in Bacillus subtilis (strain 168).